A 130-amino-acid polypeptide reads, in one-letter code: Small ribosomal subunit protein uS11c (130 aa).

The protein belongs to the universal ribosomal protein uS11 family. As to quaternary structure, part of the 30S ribosomal subunit.

Its subcellular location is the plastid. It is found in the chloroplast. In Angiopteris evecta (Mule's foot fern), this protein is Small ribosomal subunit protein uS11c.